A 269-amino-acid polypeptide reads, in one-letter code: 5'-nucleotidase SurE (269 aa).

Residues aspartate 11, aspartate 12, serine 42, and asparagine 90 each contribute to the a divalent metal cation site.

It belongs to the SurE nucleotidase family. Requires a divalent metal cation as cofactor.

The protein resides in the cytoplasm. The enzyme catalyses a ribonucleoside 5'-phosphate + H2O = a ribonucleoside + phosphate. Nucleotidase that shows phosphatase activity on nucleoside 5'-monophosphates. This is 5'-nucleotidase SurE from Haloarcula marismortui (strain ATCC 43049 / DSM 3752 / JCM 8966 / VKM B-1809) (Halobacterium marismortui).